The primary structure comprises 420 residues: Protein maelstrom homolog (420 aa).

Residues 4–73 (RRASRNAYYF…AQGKDSGPSE (70 aa)) constitute a DNA-binding region (HMG box). Disordered stretches follow at residues 62–94 (RAAQ…KQNV), 341–372 (GFSH…GQNS), and 392–420 (NIHK…SSLS). 2 stretches are compositionally biased toward polar residues: residues 344–358 (HFSS…NTPT) and 392–407 (NIHK…SPYT).

Belongs to the maelstrom family. In terms of assembly, interacts with SMARCB1, SIN3B and DDX4. Interacts with piRNA-associated proteins TDRD1, PIWIL1 and PIWIL2. Interacts with TEX19.

The protein localises to the cytoplasm. It localises to the nucleus. Functionally, plays a central role during spermatogenesis by repressing transposable elements and preventing their mobilization, which is essential for the germline integrity. Acts via the piRNA metabolic process, which mediates the repression of transposable elements during meiosis by forming complexes composed of piRNAs and Piwi proteins and governs the methylation and subsequent repression of transposons. Its association with piP-bodies suggests a participation in the secondary piRNAs metabolic process. Required for the localization of germ-cell factors to the meiotic nuage. The sequence is that of Protein maelstrom homolog (MAEL) from Bos taurus (Bovine).